Here is a 224-residue protein sequence, read N- to C-terminus: Cytidylate kinase (224 aa).

Residue 12 to 20 (GPSGAGKGT) coordinates ATP.

This sequence belongs to the cytidylate kinase family. Type 1 subfamily.

The protein resides in the cytoplasm. The enzyme catalyses CMP + ATP = CDP + ADP. The catalysed reaction is dCMP + ATP = dCDP + ADP. The sequence is that of Cytidylate kinase from Aliivibrio salmonicida (strain LFI1238) (Vibrio salmonicida (strain LFI1238)).